Reading from the N-terminus, the 224-residue chain is Glutathione peroxidase 3 (224 aa).

The first 18 residues, 1 to 18 (MAPGSVLSLAVALATIIG), serve as a signal peptide directing secretion. Residue N38 is glycosylated (N-linked (GlcNAc...) asparagine). C73 is an active-site residue.

It belongs to the glutathione peroxidase family.

It localises to the secreted. It is found in the extracellular space. It carries out the reaction 2 glutathione + H2O2 = glutathione disulfide + 2 H2O. The chain is Glutathione peroxidase 3 (gpx-3) from Caenorhabditis elegans.